A 107-amino-acid chain; its full sequence is Multidrug resistance protein mmr (107 aa).

A run of 4 helical transmembrane segments spans residues 2 to 19 (TYLF…ATSL), 29 to 51 (LWPT…VSIS), 58 to 80 (VAYA…LFLG), and 84 to 106 (SVTK…LTGA).

The protein belongs to the drug/metabolite transporter (DMT) superfamily. Small multidrug resistance (SMR) (TC 2.A.7.1) family. Mmr subfamily.

Its subcellular location is the cell membrane. Its function is as follows. Multidrug efflux pump. Confers resistance to tetraphenylphosphonium (TPP), erythromycin, ethidium bromide, acriflavine, safranin O and pyronin Y. In Mycolicibacterium paratuberculosis (strain ATCC BAA-968 / K-10) (Mycobacterium paratuberculosis), this protein is Multidrug resistance protein mmr (mmr).